Consider the following 135-residue polypeptide: Fluoride-specific ion channel FluC 2 (135 aa).

The next 4 membrane-spanning stretches (helical) occupy residues 5–25 (VLAAVAAGGALGALARAGLLA), 36–56 (WGTVLVNVLGCALIGVLMETL), 68–88 (PFLGVGVLGGFTTFSAAITDA), and 100–120 (ALLAIAANLIGALLAVSAAAG). Residues Gly76 and Thr79 each coordinate Na(+).

This sequence belongs to the fluoride channel Fluc/FEX (TC 1.A.43) family.

The protein localises to the cell membrane. The enzyme catalyses fluoride(in) = fluoride(out). Its activity is regulated as follows. Na(+) is not transported, but it plays an essential structural role and its presence is essential for fluoride channel function. Fluoride-specific ion channel. Important for reducing fluoride concentration in the cell, thus reducing its toxicity. The sequence is that of Fluoride-specific ion channel FluC 2 from Thermobifida fusca (strain YX).